Reading from the N-terminus, the 84-residue chain is UPF0320 protein YNR077C (84 aa).

The protein belongs to the UPF0320 family.

In Saccharomyces cerevisiae (strain ATCC 204508 / S288c) (Baker's yeast), this protein is UPF0320 protein YNR077C.